The following is a 222-amino-acid chain: LHFPL tetraspan subfamily member 3 protein (222 aa).

4 consecutive transmembrane segments (helical) span residues 22 to 42 (IGVL…VCFI), 96 to 116 (FFIG…TLFF), 126 to 146 (ICAW…MIFP), and 177 to 197 (ILAI…VVLG).

The protein belongs to the LHFP family. Brain-specific.

It localises to the membrane. This Mus musculus (Mouse) protein is LHFPL tetraspan subfamily member 3 protein.